A 433-amino-acid polypeptide reads, in one-letter code: tRNA modification GTPase MnmE (433 aa).

(6S)-5-formyl-5,6,7,8-tetrahydrofolate is bound by residues Arg-24, Glu-81, and Arg-120. Residues Gly-216–Glu-359 form the TrmE-type G domain. Asn-226 serves as a coordination point for K(+). GTP-binding positions include Asn-226 to Thr-231, Ser-245 to Thr-251, Asp-270 to Gly-273, and Ser-340 to Arg-342. Residue Ser-230 coordinates Mg(2+). K(+)-binding residues include Ser-245, Ile-247, and Thr-250. Thr-251 is a binding site for Mg(2+). Residue Lys-433 participates in (6S)-5-formyl-5,6,7,8-tetrahydrofolate binding.

This sequence belongs to the TRAFAC class TrmE-Era-EngA-EngB-Septin-like GTPase superfamily. TrmE GTPase family. Homodimer. Heterotetramer of two MnmE and two MnmG subunits. Requires K(+) as cofactor.

It localises to the cytoplasm. Exhibits a very high intrinsic GTPase hydrolysis rate. Involved in the addition of a carboxymethylaminomethyl (cmnm) group at the wobble position (U34) of certain tRNAs, forming tRNA-cmnm(5)s(2)U34. The protein is tRNA modification GTPase MnmE of Acidiphilium cryptum (strain JF-5).